The chain runs to 51 residues: Large ribosomal subunit protein eL39 (51 aa).

A compositionally biased stretch (basic residues) spans M1 to N19. A disordered region spans residues M1 to P23.

It belongs to the eukaryotic ribosomal protein eL39 family.

This chain is Large ribosomal subunit protein eL39, found in Methanosarcina mazei (strain ATCC BAA-159 / DSM 3647 / Goe1 / Go1 / JCM 11833 / OCM 88) (Methanosarcina frisia).